Consider the following 314-residue polypeptide: 4-hydroxy-3-methylbut-2-enyl diphosphate reductase (314 aa).

A [4Fe-4S] cluster-binding site is contributed by C12. Positions 41 and 74 each coordinate (2E)-4-hydroxy-3-methylbut-2-enyl diphosphate. Residues H41 and H74 each coordinate dimethylallyl diphosphate. 2 residues coordinate isopentenyl diphosphate: H41 and H74. A [4Fe-4S] cluster-binding site is contributed by C96. H124 is a binding site for (2E)-4-hydroxy-3-methylbut-2-enyl diphosphate. H124 lines the dimethylallyl diphosphate pocket. An isopentenyl diphosphate-binding site is contributed by H124. Residue E126 is the Proton donor of the active site. T167 serves as a coordination point for (2E)-4-hydroxy-3-methylbut-2-enyl diphosphate. C197 is a [4Fe-4S] cluster binding site. The (2E)-4-hydroxy-3-methylbut-2-enyl diphosphate site is built by S225, S226, N227, and S269. S225, S226, N227, and S269 together coordinate dimethylallyl diphosphate. S225, S226, N227, and S269 together coordinate isopentenyl diphosphate.

The protein belongs to the IspH family. [4Fe-4S] cluster is required as a cofactor.

The catalysed reaction is isopentenyl diphosphate + 2 oxidized [2Fe-2S]-[ferredoxin] + H2O = (2E)-4-hydroxy-3-methylbut-2-enyl diphosphate + 2 reduced [2Fe-2S]-[ferredoxin] + 2 H(+). The enzyme catalyses dimethylallyl diphosphate + 2 oxidized [2Fe-2S]-[ferredoxin] + H2O = (2E)-4-hydroxy-3-methylbut-2-enyl diphosphate + 2 reduced [2Fe-2S]-[ferredoxin] + 2 H(+). The protein operates within isoprenoid biosynthesis; dimethylallyl diphosphate biosynthesis; dimethylallyl diphosphate from (2E)-4-hydroxy-3-methylbutenyl diphosphate: step 1/1. Its pathway is isoprenoid biosynthesis; isopentenyl diphosphate biosynthesis via DXP pathway; isopentenyl diphosphate from 1-deoxy-D-xylulose 5-phosphate: step 6/6. Catalyzes the conversion of 1-hydroxy-2-methyl-2-(E)-butenyl 4-diphosphate (HMBPP) into a mixture of isopentenyl diphosphate (IPP) and dimethylallyl diphosphate (DMAPP). Acts in the terminal step of the DOXP/MEP pathway for isoprenoid precursor biosynthesis. The polypeptide is 4-hydroxy-3-methylbut-2-enyl diphosphate reductase (Mannheimia succiniciproducens (strain KCTC 0769BP / MBEL55E)).